The following is a 338-amino-acid chain: Homoserine kinase (338 aa).

Belongs to the GHMP kinase family. Homoserine kinase subfamily.

The catalysed reaction is L-homoserine + ATP = O-phospho-L-homoserine + ADP + H(+). It participates in amino-acid biosynthesis; L-threonine biosynthesis; L-threonine from L-aspartate: step 4/5. Functionally, commits homoserine to the threonine biosynthesis pathway by catalyzing its O-phosphorylation. This is Homoserine kinase from Schizosaccharomyces pombe (strain 972 / ATCC 24843) (Fission yeast).